A 175-amino-acid polypeptide reads, in one-letter code: Large ribosomal subunit protein uL10 (175 aa).

The protein belongs to the universal ribosomal protein uL10 family. As to quaternary structure, part of the ribosomal stalk of the 50S ribosomal subunit. The N-terminus interacts with L11 and the large rRNA to form the base of the stalk. The C-terminus forms an elongated spine to which L12 dimers bind in a sequential fashion forming a multimeric L10(L12)X complex.

In terms of biological role, forms part of the ribosomal stalk, playing a central role in the interaction of the ribosome with GTP-bound translation factors. This is Large ribosomal subunit protein uL10 from Prochlorococcus marinus (strain NATL2A).